The chain runs to 378 residues: Zinc transporter 7 (378 aa).

At 1–37 (MLPLSIKDDEYKPPKFNLFGKISGWFRSILSDKTSRN) the chain is on the cytoplasmic side. The helical transmembrane segment at 38–58 (LFFFLCLNLSFAFVELLYGIW) threads the bilayer. Residues 59–67 (SNCLGLISD) lie on the Lumenal side of the membrane. Residues 68–88 (SFHMFFDSTAILAGLAASVIS) form a helical membrane-spanning segment. Residues 89–102 (KWRDNDAFSYGYVR) lie on the Cytoplasmic side of the membrane. Residues 103–123 (AEVLAGFVNGLFLIFTAFFIF) form a helical membrane-spanning segment. Topologically, residues 124–140 (SEGVERALAPPDVHHER) are lumenal. The chain crosses the membrane as a helical span at residues 141–161 (LLLVSILGFVVNLVGIFVFNH). The interval 161-220 (HGGHGHSHGSGHGHSHSLFNGALDHSHGHEDHCHSHEAKHGAAHSHDHDHAHGHGHLHSH) is his-rich loop. Over 162–238 (GGHGHSHGSG…AGPSRQILQG (77 aa)) the chain is Cytoplasmic. Basic and acidic residues predominate over residues 186-223 (SHGHEDHCHSHEAKHGAAHSHDHDHAHGHGHLHSHDGP). Residues 186 to 224 (SHGHEDHCHSHEAKHGAAHSHDHDHAHGHGHLHSHDGPS) form a disordered region. Residues 239–259 (VFLHILADTLGSIGVIASAIM) traverse the membrane as a helical segment. Residues 260–264 (MQNFG) lie on the Lumenal side of the membrane. Residues 265–285 (LMIADPICSILIAILIVVSVI) form a helical membrane-spanning segment. Residues 286–378 (PLLRESVGIL…LYVQIDFAAM (93 aa)) lie on the Cytoplasmic side of the membrane.

Belongs to the cation diffusion facilitator (CDF) transporter (TC 2.A.4) family. SLC30A subfamily. Homooligomer. As to expression, highly expressed in liver, spleen, duodenum and part of the jejunum of small intestine (at protein level). Moderately expressed in kidney, lung, and brain. Barely detectable in heart. In brain, expressed in cerebellum, cerebral cortex and hippocampus (at protein level).

It localises to the golgi apparatus membrane. It is found in the cytoplasmic vesicle. The protein localises to the golgi apparatus. The protein resides in the trans-Golgi network. Its subcellular location is the sarcoplasmic reticulum. It localises to the mitochondrion. The enzyme catalyses Zn(2+)(in) = Zn(2+)(out). Functionally, zinc ion transporter mediating zinc entry from the cytosol into the lumen of organelles along the secretory pathway. By contributing to zinc ion homeostasis within the early secretory pathway, regulates the activation and folding of enzymes like alkaline phosphatases. The chain is Zinc transporter 7 from Mus musculus (Mouse).